Reading from the N-terminus, the 458-residue chain is Argininosuccinate lyase (458 aa).

This sequence belongs to the lyase 1 family. Argininosuccinate lyase subfamily.

It localises to the cytoplasm. It carries out the reaction 2-(N(omega)-L-arginino)succinate = fumarate + L-arginine. Its pathway is amino-acid biosynthesis; L-arginine biosynthesis; L-arginine from L-ornithine and carbamoyl phosphate: step 3/3. The protein is Argininosuccinate lyase of Acetivibrio thermocellus (strain ATCC 27405 / DSM 1237 / JCM 9322 / NBRC 103400 / NCIMB 10682 / NRRL B-4536 / VPI 7372) (Clostridium thermocellum).